Consider the following 373-residue polypeptide: Protein-glutamate methylesterase/protein-glutamine glutaminase 1 (373 aa).

One can recognise a Response regulatory domain in the interval 16-133 (RVVVVDDSAL…ASGLTELSDQ (118 aa)). Aspartate 67 is modified (4-aspartylphosphate). A CheB-type methylesterase domain is found at 175 to 367 (RVSTEKLICI…PALIAKLSSA (193 aa)). Catalysis depends on residues serine 187, histidine 213, and aspartate 309.

It belongs to the CheB family. Phosphorylated by CheA. Phosphorylation of the N-terminal regulatory domain activates the methylesterase activity.

The protein resides in the cytoplasm. It carries out the reaction [protein]-L-glutamate 5-O-methyl ester + H2O = L-glutamyl-[protein] + methanol + H(+). The enzyme catalyses L-glutaminyl-[protein] + H2O = L-glutamyl-[protein] + NH4(+). Involved in chemotaxis. Part of a chemotaxis signal transduction system that modulates chemotaxis in response to various stimuli. Catalyzes the demethylation of specific methylglutamate residues introduced into the chemoreceptors (methyl-accepting chemotaxis proteins or MCP) by CheR. Also mediates the irreversible deamidation of specific glutamine residues to glutamic acid. In Albidiferax ferrireducens (strain ATCC BAA-621 / DSM 15236 / T118) (Rhodoferax ferrireducens), this protein is Protein-glutamate methylesterase/protein-glutamine glutaminase 1.